A 127-amino-acid chain; its full sequence is Large ribosomal subunit protein bL12 (127 aa).

It belongs to the bacterial ribosomal protein bL12 family. Homodimer. Part of the ribosomal stalk of the 50S ribosomal subunit. Forms a multimeric L10(L12)X complex, where L10 forms an elongated spine to which 2 to 4 L12 dimers bind in a sequential fashion. Binds GTP-bound translation factors.

In terms of biological role, forms part of the ribosomal stalk which helps the ribosome interact with GTP-bound translation factors. Is thus essential for accurate translation. This is Large ribosomal subunit protein bL12 from Sinorhizobium fredii (strain NBRC 101917 / NGR234).